Here is a 540-residue protein sequence, read N- to C-terminus: CBL-interacting protein kinase 12 (540 aa).

The segment at 1 to 23 (MLMATVSPARREPTPQAVRASPM) is disordered. Positions 46–300 (YELGRVLGQG…VPEIIESDWF (255 aa)) constitute a Protein kinase domain. ATP-binding positions include 52 to 60 (LGQGSFAKV) and lysine 75. Aspartate 168 (proton acceptor) is an active-site residue. The activation loop stretch occupies residues 186–215 (DFGLAAGPDQFDPDGLLHTFCGTPAYVAPE). Residues 333–348 (PPPLGLAPPVPPPPQG) are compositionally biased toward pro residues. Positions 333–380 (PPPLGLAPPVPPPPQGDDPDGSGSESDSSVVSCPATLSTGESQRVRGS) are disordered. Low complexity predominate over residues 353 to 364 (GSGSESDSSVVS). Positions 370 to 406 (STGESQRVRGSLPRPASLNAFDIISFSKGFNLSGLFE) constitute an NAF domain. The tract at residues 409–438 (GNEIRFVSGEPMSDIVKKLEEIAKVKSFTV) is PPI.

The protein belongs to the protein kinase superfamily. CAMK Ser/Thr protein kinase family. SNF1 subfamily. It depends on Mg(2+) as a cofactor. Post-translationally, autophosphorylated. As to expression, expressed at low levels in leaf blades.

The catalysed reaction is L-seryl-[protein] + ATP = O-phospho-L-seryl-[protein] + ADP + H(+). It catalyses the reaction L-threonyl-[protein] + ATP = O-phospho-L-threonyl-[protein] + ADP + H(+). Functionally, involved in drought stress tolerance. CIPK serine-threonine protein kinases interact with CBL proteins. Binding of a CBL protein to the regulatory NAF domain of CIPK protein lead to the activation of the kinase in a calcium-dependent manner. In Oryza sativa subsp. japonica (Rice), this protein is CBL-interacting protein kinase 12 (CIPK12).